The primary structure comprises 102 residues: Large ribosomal subunit protein bL21 (102 aa).

It belongs to the bacterial ribosomal protein bL21 family. Part of the 50S ribosomal subunit. Contacts protein L20.

This protein binds to 23S rRNA in the presence of protein L20. The polypeptide is Large ribosomal subunit protein bL21 (Geotalea uraniireducens (strain Rf4) (Geobacter uraniireducens)).